The following is a 140-amino-acid chain: FLYWCH family member 2 (140 aa).

Disordered stretches follow at residues Met1–Phe39 and Thr83–Leu140. Ser21 carries the post-translational modification Phosphoserine. The span at Pro98–Asp114 shows a compositional bias: basic and acidic residues. Residues Ala118–Glu127 are compositionally biased toward low complexity.

The protein is FLYWCH family member 2 (FLYWCH2) of Pongo abelii (Sumatran orangutan).